We begin with the raw amino-acid sequence, 278 residues long: MFPFSGCWRTELLLLLLLAVAVRESWQIEEKSCDLVGEKDKESKNEVALLERLRPLFNKSFESTVGQGSDTYSYIFRVCREASNHSSGAGLVQINKSNDKETVVGRINETHIFNGSNWIMLIYKGGDEYDNHCGKEQRRAVVMISCNRHTLAANFNPVSEERGKVQDCFYLFEMDSSLACSPEVSHLSVGSILLVIFASLVAVYIIGGFLYQRLVVGAKGMEQFPHLAFWQDLGNLVADGCDFVCRSKPRNVPAAYRGVGDDQLGEESEERDDHLLPM.

The first 21 residues, Met-1–Ala-21, serve as a signal peptide directing secretion. Residues Val-22–His-186 are Lumenal-facing. Residues Lys-31–Pro-182 form the MRH domain. Cys-33 and Cys-79 are oxidised to a cystine. Residues Asn-58, Asn-84, Asn-95, Asn-108, and Asn-114 are each glycosylated (N-linked (GlcNAc...) asparagine). Intrachain disulfides connect Cys-133-Cys-168 and Cys-146-Cys-180. A helical membrane pass occupies residues Leu-187–Tyr-211. At Gln-212–Met-278 the chain is on the cytoplasmic side. The tract at residues Arg-257–Met-278 is disordered. A Phosphoserine modification is found at Ser-268.

As to quaternary structure, homodimer. Binds GGA1, GGA2 and GGA3.

Its subcellular location is the lysosome membrane. In terms of biological role, transport of phosphorylated lysosomal enzymes from the Golgi complex and the cell surface to lysosomes. Lysosomal enzymes bearing phosphomannosyl residues bind specifically to mannose-6-phosphate receptors in the Golgi apparatus and the resulting receptor-ligand complex is transported to an acidic prelyosomal compartment where the low pH mediates the dissociation of the complex. This chain is Cation-dependent mannose-6-phosphate receptor (M6pr), found in Mus musculus (Mouse).